Here is a 413-residue protein sequence, read N- to C-terminus: Cardiolipin synthase B (413 aa).

PLD phosphodiesterase domains lie at 108-135 and 285-312; these read VFRRMHRKIVVIDARIAFIGGLNYSSEH and RRRPLHGKVALMDDHWATVGSSNLDPLS. Active-site residues include H113, K115, D120, H290, K292, and D297. The segment at 388–413 is disordered; that stretch reads TQVDPPAQPTMETQDRVETENTGVNP.

It belongs to the phospholipase D family. Cardiolipin synthase subfamily. ClsB sub-subfamily.

It is found in the cell membrane. It catalyses the reaction 2 a 1,2-diacyl-sn-glycero-3-phospho-(1'-sn-glycerol) = a cardiolipin + glycerol. Catalyzes the phosphatidyl group transfer from one phosphatidylglycerol molecule to another to form cardiolipin (CL) (diphosphatidylglycerol) and glycerol. The chain is Cardiolipin synthase B from Shigella flexneri.